A 129-amino-acid chain; its full sequence is Fluoride-specific ion channel FluC 2 (129 aa).

The next 4 helical transmembrane spans lie at 3–23 (FLYV…MNLW), 32–52 (ATLA…PFLA), 59–79 (LVLL…FSAF), and 90–110 (GEVV…LVMV). Residues Gly-71 and Thr-74 each contribute to the Na(+) site.

This sequence belongs to the fluoride channel Fluc/FEX (TC 1.A.43) family.

It localises to the cell membrane. It catalyses the reaction fluoride(in) = fluoride(out). Its activity is regulated as follows. Na(+) is not transported, but it plays an essential structural role and its presence is essential for fluoride channel function. Fluoride-specific ion channel. Important for reducing fluoride concentration in the cell, thus reducing its toxicity. This chain is Fluoride-specific ion channel FluC 2, found in Listeria innocua serovar 6a (strain ATCC BAA-680 / CLIP 11262).